The sequence spans 160 residues: Arsenate reductase 2.1 (160 aa).

Residues 42–143 (SNPRVAIIDV…WELSGQPVCR (102 aa)) enclose the Rhodanese domain. Residue Cys94 is the Cysteine persulfide intermediate of the active site.

The catalysed reaction is [glutaredoxin]-dithiol + arsenate + glutathione + H(+) = glutathionyl-S-S-[glutaredoxin] + arsenite + H2O. Functionally, possesses arsenate reductase activity in vitro. Catalyzes the reduction of arsenate [As(V)] to arsenite [As(III)]. May play a role in arsenic retention in roots. Its function is as follows. Possesses phosphatase activity towards p-nitrophenyl phosphate in vitro. In Oryza sativa subsp. japonica (Rice), this protein is Arsenate reductase 2.1 (ACR2.1).